Here is a 393-residue protein sequence, read N- to C-terminus: MTIRNQRLSLLKQPISSILNQHLIDYPTPSNLSYWWGFGSLAGICLVIQIVTGVFLAMHYTPHVDLAFNSVEHIMRDVEGGWLLRYMHANGASMFFIVVYLHIFRGLYYASYSSPREFVWCLGVVIFLLMIVTAFIGYVLPWGQMSFWGATVITSLASAIPVVGDTIVTWLWGGFSVDNATLNRFFSLHYLLPFILVGASLLHLAALHQYGSNNPLGVHSEMDKIAFYPYFYVKDLVGWVAFAIFFSIWIFYAPNVLGHPDNYIPANPMSTPPHIVPEWYFLPIYAILRSIPDKVGGVAAIALVFICLLALPFFKSMYVRSSSFRPIYQGIFWLLLADCLLLGWIGCQPVEAPFVTIGQISSLVFFLFFAITPILGRVGRGIPNSYTDETDHT.

Helical transmembrane passes span 38-58 (FGSL…FLAM), 82-104 (WLLR…LHIF), 119-139 (VWCL…IGYV), and 185-205 (FFSL…LHLA). Residues His-88 and His-102 each contribute to the heme b site. Residues His-189 and His-203 each coordinate heme b. His-208 is an a ubiquinone binding site. Transmembrane regions (helical) follow at residues 231–251 (FYVK…IWIF), 295–315 (VGGV…PFFK), 327–347 (IYQG…WIGC), and 354–373 (FVTI…AITP).

The protein belongs to the cytochrome b family. The main subunits of complex b-c1 are: cytochrome b, cytochrome c1 and the Rieske protein. Heme b is required as a cofactor. Post-translationally, first mitochondrial-encoded protein to be shown to have its N-terminal methionine cleaved off.

The protein resides in the mitochondrion inner membrane. In terms of biological role, component of the ubiquinol-cytochrome c reductase complex (complex III or cytochrome b-c1 complex) that is part of the mitochondrial respiratory chain. The b-c1 complex mediates electron transfer from ubiquinol to cytochrome c. Contributes to the generation of a proton gradient across the mitochondrial membrane that is then used for ATP synthesis. The sequence is that of Cytochrome b (MT-CYB) from Solanum tuberosum (Potato).